The sequence spans 98 residues: Large ribosomal subunit protein uL23 (98 aa).

The protein belongs to the universal ribosomal protein uL23 family. Part of the 50S ribosomal subunit. Contacts protein L29, and trigger factor when it is bound to the ribosome.

Functionally, one of the early assembly proteins it binds 23S rRNA. One of the proteins that surrounds the polypeptide exit tunnel on the outside of the ribosome. Forms the main docking site for trigger factor binding to the ribosome. This chain is Large ribosomal subunit protein uL23, found in Parafrankia sp. (strain EAN1pec).